Here is a 235-residue protein sequence, read N- to C-terminus: Large ribosomal subunit protein uL1 (235 aa).

This sequence belongs to the universal ribosomal protein uL1 family. In terms of assembly, part of the 50S ribosomal subunit.

Binds directly to 23S rRNA. The L1 stalk is quite mobile in the ribosome, and is involved in E site tRNA release. Its function is as follows. Protein L1 is also a translational repressor protein, it controls the translation of the L11 operon by binding to its mRNA. In Solidesulfovibrio magneticus (strain ATCC 700980 / DSM 13731 / RS-1) (Desulfovibrio magneticus), this protein is Large ribosomal subunit protein uL1.